The following is a 136-amino-acid chain: Small ribosomal subunit protein uS11 (136 aa).

Disordered stretches follow at residues 1–20 (MAQR…NVTN) and 115–136 (VTPQ…EKAR). Basic residues predominate over residues 125-136 (PPKRVLKREKAR).

It belongs to the universal ribosomal protein uS11 family. In terms of assembly, part of the 30S ribosomal subunit. Interacts with proteins S7 and S18. Binds to IF-3.

In terms of biological role, located on the platform of the 30S subunit, it bridges several disparate RNA helices of the 16S rRNA. Forms part of the Shine-Dalgarno cleft in the 70S ribosome. This chain is Small ribosomal subunit protein uS11, found in Mycoplasmopsis pulmonis (strain UAB CTIP) (Mycoplasma pulmonis).